Consider the following 425-residue polypeptide: Histidine--tRNA ligase (425 aa).

This sequence belongs to the class-II aminoacyl-tRNA synthetase family. Homodimer.

It localises to the cytoplasm. It catalyses the reaction tRNA(His) + L-histidine + ATP = L-histidyl-tRNA(His) + AMP + diphosphate + H(+). The sequence is that of Histidine--tRNA ligase from Desulforapulum autotrophicum (strain ATCC 43914 / DSM 3382 / VKM B-1955 / HRM2) (Desulfobacterium autotrophicum).